The sequence spans 108 residues: Parvalbumin beta 2 (108 aa).

S2 carries the post-translational modification N-acetylserine. EF-hand domains are found at residues K38–S73 and L77–G108. Residues D51, D53, S55, F57, E59, E62, D90, D92, D94, M96, and E101 each contribute to the Ca(2+) site.

It belongs to the parvalbumin family.

In muscle, parvalbumin is thought to be involved in relaxation after contraction. It binds two calcium ions. This Salmo salar (Atlantic salmon) protein is Parvalbumin beta 2.